The following is a 658-amino-acid chain: DNA mismatch repair protein MutL (658 aa).

Residues 114-130 (RQEDSSHATQVKAEDGK) are compositionally biased toward basic and acidic residues. 2 disordered regions span residues 114-137 (RQED…PTAA) and 369-391 (DYPT…TAPM).

Belongs to the DNA mismatch repair MutL/HexB family.

Its function is as follows. This protein is involved in the repair of mismatches in DNA. It is required for dam-dependent methyl-directed DNA mismatch repair. May act as a 'molecular matchmaker', a protein that promotes the formation of a stable complex between two or more DNA-binding proteins in an ATP-dependent manner without itself being part of a final effector complex. This is DNA mismatch repair protein MutL from Neisseria meningitidis serogroup C (strain 053442).